A 640-amino-acid polypeptide reads, in one-letter code: Leucine-rich repeat-containing protein 4C (640 aa).

The N-terminal stretch at 1–44 (MLNKMTLHPQQIMIGPRFNRALFDPLLVVLLALQLLVVAGLVRA) is a signal peptide. Residues 45 to 76 (QTCPSVCSCSNQFSKVICVRKNLREVPDGIST) enclose the LRRNT domain. LRR repeat units follow at residues 77-98 (NTRL…SFKH), 101-122 (HLEI…AFNG), 125-146 (NLNT…AFVY), 149-170 (KLKE…AFNR), 173-195 (SLRR…AFEG), 198-219 (NLRY…TPLI), 220-241 (KLDE…SFQG), 244-265 (HLQK…AFDN), and 268-289 (SLVE…LFTP). The region spanning 301–353 (NPWNCNCDILWLSWWIKDMAPSNTACCARCNTPPNLKGRYIGELDQNYFTCYA) is the LRRCT domain. Residues 354–442 (PVIVEPPADL…GNTTASATLN (89 aa)) form the Ig-like C2-type domain. Residues Cys-375 and Cys-426 are joined by a disulfide bond. Residues 463–483 (EPSQDEARTTDNNVGPTPVVD) are disordered. The chain crosses the membrane as a helical span at residues 528–548 (IIIGCFVAITLMAAVMLVIFY). A Phosphoserine modification is found at Ser-631.

As to quaternary structure, interacts with NTNG1 and WHRN. Highly expressed in the cerebral cortex, including frontal, parietal and occipital lobes. Putamen, amygdala, hippocampus and medulla oblongata show moderate expression. Caudate nucleus and thalamus express small amounts, whereas other brain regions show very weak or no expression.

The protein resides in the postsynaptic cell membrane. Its function is as follows. May promote neurite outgrowth of developing thalamic neurons. The chain is Leucine-rich repeat-containing protein 4C (LRRC4C) from Homo sapiens (Human).